A 978-amino-acid chain; its full sequence is Chitin synthase 3 (978 aa).

A compositionally biased stretch (low complexity) spans 1-13 (MGFNPQGQGNGPN). Disordered stretches follow at residues 1–95 (MGFN…FDGH) and 108–127 (GHYP…YEYP). N-linked (GlcNAc...) asparagine glycosylation occurs at N72. N-linked (GlcNAc...) asparagine glycosylation is present at N604. 7 helical membrane-spanning segments follow: residues 641–661 (LVNV…TTII), 686–706 (IVNV…FVLA), 719–739 (VLSF…TGYL), 775–795 (LIII…FLYL), 803–823 (SFPQ…VYAF), 908–928 (VILW…DDFI), and 946–966 (VLLY…LWFI).

The protein belongs to the chitin synthase family. Class III subfamily.

The protein resides in the cell membrane. It carries out the reaction [(1-&gt;4)-N-acetyl-beta-D-glucosaminyl](n) + UDP-N-acetyl-alpha-D-glucosamine = [(1-&gt;4)-N-acetyl-beta-D-glucosaminyl](n+1) + UDP + H(+). In terms of biological role, polymerizes chitin, a structural polymer of the cell wall and septum, by transferring the sugar moiety of UDP-GlcNAc to the non-reducing end of the growing chitin polymer. Is essential for viability. This chain is Chitin synthase 3, found in Fusarium oxysporum f. sp. lycopersici (strain 4287 / CBS 123668 / FGSC 9935 / NRRL 34936) (Fusarium vascular wilt of tomato).